We begin with the raw amino-acid sequence, 405 residues long: Corticosteroid-binding globulin (405 aa).

The signal sequence occupies residues 1 to 22; that stretch reads MPLLLYTCLLWLPTSGLWTVQA. 3 N-linked (GlcNAc...) asparagine glycosylation sites follow: asparagine 31, asparagine 96, and asparagine 176. Residue glutamine 254 coordinates cortisol. Asparagine 260 carries N-linked (GlcNAc...) asparagine glycosylation. Asparagine 286 is a binding site for cortisol. Asparagine 330 and asparagine 369 each carry an N-linked (GlcNAc...) asparagine glycan. Histidine 390 and tryptophan 393 together coordinate cortisol.

Belongs to the serpin family. In terms of processing, N-glycosylated; binds 5 oligosaccharide chains. Post-translationally, glycosylation in position Asn-260 is needed for steroid binding. Plasma; synthesized in liver. Has also been identified in a number of glycocorticoid responsive cells.

The protein resides in the secreted. Functionally, major transport protein for glucocorticoids and progestins in the blood of almost all vertebrate species. This chain is Corticosteroid-binding globulin (SERPINA6), found in Homo sapiens (Human).